The sequence spans 873 residues: Zinc fingers and homeoboxes protein 1 (873 aa).

The segment at 24-63 (LISDLDEGPPVLTPVENTRAESISSDEEVHESVDSDNQQN) is disordered. At Thr36 the chain carries Phosphothreonine. Phosphoserine is present on residues Ser45, Ser47, and Ser48. 2 C2H2-type zinc fingers span residues 70–93 (YECKYCTFQTPDLNMFTFHVDSEH) and 102–125 (YVCVECNFLTKRYDALSEHNLKYH). A Glycyl lysine isopeptide (Lys-Gly) (interchain with G-Cter in SUMO2) cross-link involves residue Lys159. The tract at residues 198–236 (VHHNSVEDVPEEKENEIKPDREETVENPSSSASESNTST) is disordered. Ser202 is modified (phosphoserine). The span at 212-221 (NEIKPDREET) shows a compositional bias: basic and acidic residues. Positions 223–236 (ENPSSSASESNTST) are enriched in low complexity. Positions 272–432 (NSNLIPKVLI…QNNVQKSQVP (161 aa)) are required for dimerization. The segment at 272-564 (NSNLIPKVLI…VQPKQSWNPF (293 aa)) is required for interaction with NFYA. Residues 284–346 (NSIPTYNAAL…LKHGVSWTPE (63 aa)) constitute a DNA-binding region (homeobox 1). Residues 431–454 (VPAAQPTAETKPATAAVPTSQSVK) form a disordered region. Residues Lys441, Lys454, and Lys485 each participate in a glycyl lysine isopeptide (Lys-Gly) (interchain with G-Cter in SUMO2) cross-link. A DNA-binding region (homeobox 2) is located at residues 464-526 (SFGIRAKKTK…YNQRNSKSNQ (63 aa)). 3 disordered regions span residues 544-563 (DETTESPTVGTVQPKQSWNP), 626-668 (KEEK…CKKT), and 732-769 (SSMNGLSSLRKRGRGRPKGRGRGRPRGRPRGSKRINNW). A compositionally biased stretch (polar residues) spans 550–562 (PTVGTVQPKQSWN). Residues 569–630 (PQKFKEKTAE…KSKALKEEKM (62 aa)) constitute a DNA-binding region (homeobox 3). A Glycyl lysine isopeptide (Lys-Gly) (interchain with G-Cter in SUMO2) cross-link involves residue Lys629. Ser648 is subject to Phosphoserine. Positions 660–722 (STGKICKKTP…YAWKNGNLKW (63 aa)) form a DNA-binding region, homeobox 4. The interval 734–768 (MNGLSSLRKRGRGRPKGRGRGRPRGRPRGSKRINN) is required for nuclear localization. A compositionally biased stretch (basic residues) spans 740–764 (LRKRGRGRPKGRGRGRPRGRPRGSK). Ser774 bears the Phosphoserine mark. The homeobox 5 DNA-binding region spans 777–832 (KFKTGTAILKDYYLKHKFLNEQDLDELVNKSHMGYEQVREWFAERQRRSELGIELF). The interval 829–873 (IELFEENEEEDEVIDDQEEDEEETDDSDTWEPPRHVKRKLSKSDD) is disordered. Residues 831–857 (LFEENEEEDEVIDDQEEDEEETDDSDT) show a composition bias toward acidic residues. Positions 831-873 (LFEENEEEDEVIDDQEEDEEETDDSDTWEPPRHVKRKLSKSDD) are required for repressor activity. The segment covering 863 to 873 (HVKRKLSKSDD) has biased composition (basic residues).

Belongs to the ZHX family. Forms homodimers. Heterodimer (via HD1 domain) with ZHX2 (via HD1 domain). Also forms a heterodimer with ZHX3 which is a prerequisite for repressor activity. Interacts with ATF7IP and NFYA. Interacts (via homeobox domains) with DNMT3B (via PWWP domain).

The protein resides in the nucleus. Acts as a transcriptional repressor. Increases DNMT3B-mediated repressive transcriptional activity when DNMT3B is tethered to DNA. May link molecule between DNMT3B and other co-repressor proteins. This chain is Zinc fingers and homeoboxes protein 1 (ZHX1), found in Pongo pygmaeus (Bornean orangutan).